Here is a 390-residue protein sequence, read N- to C-terminus: NADH-quinone oxidoreductase subunit D (390 aa).

This sequence belongs to the complex I 49 kDa subunit family. In terms of assembly, NDH-1 is composed of 14 different subunits. Subunits NuoB, C, D, E, F, and G constitute the peripheral sector of the complex.

The protein localises to the cell inner membrane. It catalyses the reaction a quinone + NADH + 5 H(+)(in) = a quinol + NAD(+) + 4 H(+)(out). Its function is as follows. NDH-1 shuttles electrons from NADH, via FMN and iron-sulfur (Fe-S) centers, to quinones in the respiratory chain. The immediate electron acceptor for the enzyme in this species is believed to be ubiquinone. Couples the redox reaction to proton translocation (for every two electrons transferred, four hydrogen ions are translocated across the cytoplasmic membrane), and thus conserves the redox energy in a proton gradient. The polypeptide is NADH-quinone oxidoreductase subunit D (Geotalea uraniireducens (strain Rf4) (Geobacter uraniireducens)).